A 386-amino-acid polypeptide reads, in one-letter code: 1-deoxy-D-xylulose 5-phosphate reductoisomerase (386 aa).

The NADPH site is built by Thr-13, Gly-14, Ser-15, Ile-16, Asn-40, and Asn-122. Lys-123 contacts 1-deoxy-D-xylulose 5-phosphate. Glu-124 lines the NADPH pocket. Asp-148 provides a ligand contact to Mn(2+). 1-deoxy-D-xylulose 5-phosphate is bound by residues Ser-149, Glu-150, Ser-177, and His-201. A Mn(2+)-binding site is contributed by Glu-150. An NADPH-binding site is contributed by Gly-207. 4 residues coordinate 1-deoxy-D-xylulose 5-phosphate: Ser-214, Asn-219, Lys-220, and Glu-223. Residue Glu-223 coordinates Mn(2+).

This sequence belongs to the DXR family. Requires Mg(2+) as cofactor. Mn(2+) is required as a cofactor.

It catalyses the reaction 2-C-methyl-D-erythritol 4-phosphate + NADP(+) = 1-deoxy-D-xylulose 5-phosphate + NADPH + H(+). The protein operates within isoprenoid biosynthesis; isopentenyl diphosphate biosynthesis via DXP pathway; isopentenyl diphosphate from 1-deoxy-D-xylulose 5-phosphate: step 1/6. In terms of biological role, catalyzes the NADPH-dependent rearrangement and reduction of 1-deoxy-D-xylulose-5-phosphate (DXP) to 2-C-methyl-D-erythritol 4-phosphate (MEP). The chain is 1-deoxy-D-xylulose 5-phosphate reductoisomerase from Francisella tularensis subsp. holarctica (strain OSU18).